The chain runs to 57 residues: Ribosome modulation factor 1 (57 aa).

Over residues 1–14 (MKRQKRDRQSRAHT) the composition is skewed to basic residues. The interval 1–24 (MKRQKRDRQSRAHTRGYQAGISGR) is disordered.

This sequence belongs to the ribosome modulation factor family.

It localises to the cytoplasm. Its function is as follows. During stationary phase, converts 70S ribosomes to an inactive dimeric form (100S ribosomes). This is Ribosome modulation factor 1 from Colwellia psychrerythraea (strain 34H / ATCC BAA-681) (Vibrio psychroerythus).